The following is a 421-amino-acid chain: 4-hydroxy-3-methylbut-2-en-1-yl diphosphate synthase (flavodoxin) (421 aa).

4 residues coordinate [4Fe-4S] cluster: Cys-311, Cys-314, Cys-357, and Glu-364.

The protein belongs to the IspG family. It depends on [4Fe-4S] cluster as a cofactor.

The enzyme catalyses (2E)-4-hydroxy-3-methylbut-2-enyl diphosphate + oxidized [flavodoxin] + H2O + 2 H(+) = 2-C-methyl-D-erythritol 2,4-cyclic diphosphate + reduced [flavodoxin]. It functions in the pathway isoprenoid biosynthesis; isopentenyl diphosphate biosynthesis via DXP pathway; isopentenyl diphosphate from 1-deoxy-D-xylulose 5-phosphate: step 5/6. In terms of biological role, converts 2C-methyl-D-erythritol 2,4-cyclodiphosphate (ME-2,4cPP) into 1-hydroxy-2-methyl-2-(E)-butenyl 4-diphosphate. The sequence is that of 4-hydroxy-3-methylbut-2-en-1-yl diphosphate synthase (flavodoxin) from Xanthomonas oryzae pv. oryzae (strain KACC10331 / KXO85).